Here is a 1131-residue protein sequence, read N- to C-terminus: MPSKIEKICLLLLGFTAASNVNAYSHRRAGDTLHHRHKHEKHNDLTDSSYEPLTLSYNDTQIQQLQRRDTVQCAFPYGDKMVAVTPDEGNAGWAMSPDQYCTAGTWCPYACEPGYLMGQWDPNATSYTYPESMYGGLYCNSDGVAVKPFPSKDYCYPGVGDLSVVDQTGDGIAFCQTVLPGNEAMLIPTWVAPDSEQVLAVPDISYWDETAAHYYVNPPGVSTTDGCVWGTSANPYGNWAPYVAGANMDENNITYVKLGANPIYLDDSYWSTVKPTYGLALECEGDTCSGLPCYVDPRENGVQGCPEGSPIGAGGACFCVVGFQQGTTAKIVVVDYSEEMASSSSSASATATSSAESSIATSPITSSSNVVSSISTSSMDSSAVSSYSVVQSSLASIISNAYIATSKSGLNSGVSTLLASPTSSSTFVTSLLRRSSIDGSASSSSASLAVPTVSSSTTGSLHYKTTTTVWVTEVFTRYLGDDSTPVTSSSIFSTATEATDTSVQTSSAIYDSSSTSNIQSSSSVYASSTGALSSNSLSSSTSSVSTSYIPNASSSVYASSTEALSSNSLSSSTSSASTSYIPSASSSYEVASNSSDYYSQTVSSITASGTTSSTSEIVSTPASNSNTGSLNGTSSFNVNSVGPSSSQTTPTSSSSITGSQSLKETSSPAYVSSTVSYTSSSVDSSSTYNSTGSSSSDSQSFSGTTYSDPTTTITSEVSSILSSPTSMQSSVSRPQSSGDASGFNTIFTSISQSSDGETSGYTISSNSSQNSASEPQTAFTSSSSSATPTITQSSISTSVSSQSSMNSSYSSPISSNSVTSSTSIISSIASSSYTSIPSISSIASSFFDASGFTSIYNGTKAGFSSSFALASNSESGASDVLSSTIAKPTFKFSTSNSGSTSYSIPSSSSRNEGTTSYSSNITVTSSTLKPSLTSSVSTASSYIASSASSNTLSTEPKTFSSSSTLSESISSINTNSLTVKPESSLSSSTTSGLTSSSSTIPSSTRSESNSESASTSSASKRSSSSTSLVQSNPVKTVVSLESYKFTTSKISLVKNPTKTYTVTDVETNVVVQTHTVSYVEHSTSYTWVHTTLYEYADVEASTKSTSEPSAKSKRNAVSTFETVFLKSKSSA.

Positions 1-23 are cleaved as a signal peptide; the sequence is MPSKIEKICLLLLGFTAASNVNA. Residues Asn-58, Asn-123, Asn-252, Asn-551, Asn-593, Asn-631, and Asn-689 are each glycosylated (N-linked (GlcNAc...) asparagine). A disordered region spans residues 609-819; that stretch reads GTTSSTSEIV…SSPISSNSVT (211 aa). The segment covering 623–715 has biased composition (low complexity); that stretch reads SNSNTGSLNG…YSDPTTTITS (93 aa). The span at 716 to 725 shows a compositional bias: polar residues; the sequence is EVSSILSSPT. The span at 726–737 shows a compositional bias: low complexity; sequence SMQSSVSRPQSS. Polar residues predominate over residues 738–763; the sequence is GDASGFNTIFTSISQSSDGETSGYTI. Composition is skewed to low complexity over residues 764–773 and 780–819; these read SSNSSQNSAS and TSSS…NSVT. 3 N-linked (GlcNAc...) asparagine glycosylation sites follow: Asn-766, Asn-806, and Asn-857. The segment covering 893–909 has biased composition (low complexity); that stretch reads STSNSGSTSYSIPSSSS. The disordered stretch occupies residues 893-918; sequence STSNSGSTSYSIPSSSSRNEGTTSYS. Asn-920 carries an N-linked (GlcNAc...) asparagine glycan. The segment covering 977–1027 has biased composition (low complexity); sequence LTVKPESSLSSSTTSGLTSSSSTIPSSTRSESNSESASTSSASKRSSSSTS. The interval 977–1031 is disordered; that stretch reads LTVKPESSLSSSTTSGLTSSSSTIPSSTRSESNSESASTSSASKRSSSSTSLVQS.

Belongs to the SUN family.

The protein localises to the secreted. In terms of biological role, cell surface beta-glucosidase involved in cell wall biogenesis,. This is Probable secreted beta-glucosidase adg3 (adg3) from Schizosaccharomyces pombe (strain 972 / ATCC 24843) (Fission yeast).